Reading from the N-terminus, the 478-residue chain is Ribosomal RNA small subunit methyltransferase F (478 aa).

S-adenosyl-L-methionine contacts are provided by residues 126 to 132 (AAAPGSK), Glu-150, Asp-177, and Asp-195. Residue Cys-248 is the Nucleophile of the active site.

The protein belongs to the class I-like SAM-binding methyltransferase superfamily. RsmB/NOP family.

The protein localises to the cytoplasm. It carries out the reaction cytidine(1407) in 16S rRNA + S-adenosyl-L-methionine = 5-methylcytidine(1407) in 16S rRNA + S-adenosyl-L-homocysteine + H(+). Functionally, specifically methylates the cytosine at position 1407 (m5C1407) of 16S rRNA. The sequence is that of Ribosomal RNA small subunit methyltransferase F from Erwinia tasmaniensis (strain DSM 17950 / CFBP 7177 / CIP 109463 / NCPPB 4357 / Et1/99).